A 319-amino-acid polypeptide reads, in one-letter code: MTKPPLTLYLAAPRGFCAGVDRAIKIVEMALEKWGAPVYVRHEIVHNKFVVDRLRDMGAVFVEELDEAPTDRPVIFSAHGVPKSVPAEAERRNMVYVDATCPLVSKVHLEAERHHENGLQMIMIGHAGHPETIGTMGQLPEGEVLLVETVEDVAGLEVRDPERLAYITQTTLSIDDTAAIVAALRERFPAINIPRKEDICYATTNRQGAVKALSDRIEALLVIGAPNSSNSRRLVEVGRAAGCRVAQLVQRATEIDWDSLQGVTAVGVAAGASAPEVLVDEVIAAFRERFDTTVELVETVKERVEFKVPRILREAAETP.

Cys-17 is a [4Fe-4S] cluster binding site. Positions 46 and 79 each coordinate (2E)-4-hydroxy-3-methylbut-2-enyl diphosphate. 2 residues coordinate dimethylallyl diphosphate: His-46 and His-79. Isopentenyl diphosphate is bound by residues His-46 and His-79. Cys-101 lines the [4Fe-4S] cluster pocket. His-129 is a (2E)-4-hydroxy-3-methylbut-2-enyl diphosphate binding site. His-129 contributes to the dimethylallyl diphosphate binding site. His-129 provides a ligand contact to isopentenyl diphosphate. The active-site Proton donor is Glu-131. Thr-170 contacts (2E)-4-hydroxy-3-methylbut-2-enyl diphosphate. [4Fe-4S] cluster is bound at residue Cys-200. Ser-228, Ser-229, Asn-230, and Ser-273 together coordinate (2E)-4-hydroxy-3-methylbut-2-enyl diphosphate. 4 residues coordinate dimethylallyl diphosphate: Ser-228, Ser-229, Asn-230, and Ser-273. Ser-228, Ser-229, Asn-230, and Ser-273 together coordinate isopentenyl diphosphate.

Belongs to the IspH family. It depends on [4Fe-4S] cluster as a cofactor.

The enzyme catalyses isopentenyl diphosphate + 2 oxidized [2Fe-2S]-[ferredoxin] + H2O = (2E)-4-hydroxy-3-methylbut-2-enyl diphosphate + 2 reduced [2Fe-2S]-[ferredoxin] + 2 H(+). It catalyses the reaction dimethylallyl diphosphate + 2 oxidized [2Fe-2S]-[ferredoxin] + H2O = (2E)-4-hydroxy-3-methylbut-2-enyl diphosphate + 2 reduced [2Fe-2S]-[ferredoxin] + 2 H(+). Its pathway is isoprenoid biosynthesis; dimethylallyl diphosphate biosynthesis; dimethylallyl diphosphate from (2E)-4-hydroxy-3-methylbutenyl diphosphate: step 1/1. It participates in isoprenoid biosynthesis; isopentenyl diphosphate biosynthesis via DXP pathway; isopentenyl diphosphate from 1-deoxy-D-xylulose 5-phosphate: step 6/6. Catalyzes the conversion of 1-hydroxy-2-methyl-2-(E)-butenyl 4-diphosphate (HMBPP) into a mixture of isopentenyl diphosphate (IPP) and dimethylallyl diphosphate (DMAPP). Acts in the terminal step of the DOXP/MEP pathway for isoprenoid precursor biosynthesis. This is 4-hydroxy-3-methylbut-2-enyl diphosphate reductase from Cereibacter sphaeroides (strain ATCC 17025 / ATH 2.4.3) (Rhodobacter sphaeroides).